We begin with the raw amino-acid sequence, 501 residues long: Beta-secretase 1 (501 aa).

A signal peptide spans 1 to 21 (MAQALPWLLLWMGSGVLPAHG). Positions 22–45 (SQPGIRLPLRSGLGGAPLGLRLPR) are excised as a propeptide. At 22 to 457 (SQPGIRLPLR…PQTDESTLMT (436 aa)) the chain is on the extracellular side. The disordered stretch occupies residues 39-58 (LGLRLPRETDEESEEPGRRG). One can recognise a Peptidase A1 domain in the interval 75–416 (YYVEMTLGSP…DRARKRIGFA (342 aa)). Residue Asp93 is part of the active site. Lys126 carries the N6-acetyllysine modification. 3 N-linked (GlcNAc...) asparagine glycosylation sites follow: Asn153, Asn172, and Asn223. 3 disulfides stabilise this stretch: Cys216–Cys420, Cys278–Cys443, and Cys330–Cys380. N6-acetyllysine occurs at positions 275, 279, and 285. The active site involves Asp289. N6-acetyllysine occurs at positions 299, 300, and 307. The N-linked (GlcNAc...) asparagine glycan is linked to Asn354. A helical transmembrane segment spans residues 458–478 (IAYVMAAICALFMLPLCLMVC). S-palmitoyl cysteine attachment occurs at residues Cys474, Cys478, Cys482, and Cys485. Residues 479–501 (QWRCLRCLRHQHDDFADDISLLK) lie on the Cytoplasmic side of the membrane. Positions 479 to 501 (QWRCLRCLRHQHDDFADDISLLK) are interaction with RTN3. The short motif at 496 to 500 (DISLL) is the DXXLL element. Ser498 carries the post-translational modification Phosphoserine. Lys501 participates in a covalent cross-link: Glycyl lysine isopeptide (Lys-Gly) (interchain with G-Cter in ubiquitin).

The protein belongs to the peptidase A1 family. Monomer. Interacts (via DXXLL motif) with GGA1, GGA2 and GGA3 (via their VHS domain); the interaction highly increases when BACE1 is phosphorylated at Ser-498. Interacts with RTN1; RTN2; RTN3 and RTN4; the interaction leads to inhibition of amyloid precursor protein processing. Interacts with SNX6. Interacts with PCSK9. Interacts with NAT8 and NAT8B. Interacts with BIN1. Interacts (via extracellular domain) with ADAM10 (via extracellular domain). Interacts with SORL1; this interaction may affect binding with APP and hence reduce APP cleavage. Interacts with NRDC AND NRG1. Palmitoylation mediates lipid raft localization. Post-translationally, acetylated in the endoplasmic reticulum at Lys-126, Lys-275, Lys-279, Lys-285, Lys-299, Lys-300 and Lys-307. Acetylation by NAT8 and NAT8B is transient and deacetylation probably occurs in the Golgi. Acetylation regulates the maturation, the transport to the plasma membrane, the stability and the expression of the protein. In terms of processing, ubiquitinated at Lys-501, ubiquitination leads to lysosomal degradation. Monoubiquitinated and 'Lys-63'-linked polyubitinated. Deubiquitnated by USP8; inhibits lysosomal degradation. Phosphorylation at Ser-498 is required for interaction with GGA1 and retrograded transport from endosomal compartments to the trans-Golgi network. Non-phosphorylated BACE1 enters a direct recycling route to the cell surface. Post-translationally, N-Glycosylated. Addition of a bisecting N-acetylglucosamine by MGAT3 blocks lysosomal targeting, further degradation and is required for maintaining stability under stress conditions.

It localises to the cell membrane. The protein localises to the golgi apparatus. The protein resides in the trans-Golgi network. Its subcellular location is the endoplasmic reticulum. It is found in the endosome. It localises to the cell surface. The protein localises to the cytoplasmic vesicle membrane. The protein resides in the membrane raft. Its subcellular location is the lysosome. It is found in the late endosome. It localises to the early endosome. The protein localises to the recycling endosome. The protein resides in the cell projection. Its subcellular location is the axon. It is found in the dendrite. It catalyses the reaction Broad endopeptidase specificity. Cleaves Glu-Val-Asn-Leu-|-Asp-Ala-Glu-Phe in the Swedish variant of Alzheimer's amyloid precursor protein.. Its activity is regulated as follows. Inhibited by RTN3 and RTN4. Responsible for the proteolytic processing of the amyloid precursor protein (APP). Cleaves at the N-terminus of the A-beta peptide sequence, between residues 671 and 672 of APP, leads to the generation and extracellular release of beta-cleaved soluble APP, and a corresponding cell-associated C-terminal fragment which is later released by gamma-secretase. Cleaves CHL1. This Bos taurus (Bovine) protein is Beta-secretase 1 (BACE1).